We begin with the raw amino-acid sequence, 417 residues long: NADH-quinone oxidoreductase subunit D (417 aa).

Belongs to the complex I 49 kDa subunit family. NDH-1 is composed of 14 different subunits. Subunits NuoB, C, D, E, F, and G constitute the peripheral sector of the complex.

Its subcellular location is the cell inner membrane. It catalyses the reaction a quinone + NADH + 5 H(+)(in) = a quinol + NAD(+) + 4 H(+)(out). Functionally, NDH-1 shuttles electrons from NADH, via FMN and iron-sulfur (Fe-S) centers, to quinones in the respiratory chain. The immediate electron acceptor for the enzyme in this species is believed to be ubiquinone. Couples the redox reaction to proton translocation (for every two electrons transferred, four hydrogen ions are translocated across the cytoplasmic membrane), and thus conserves the redox energy in a proton gradient. The sequence is that of NADH-quinone oxidoreductase subunit D from Ruthia magnifica subsp. Calyptogena magnifica.